A 512-amino-acid chain; its full sequence is ATP synthase subunit alpha (512 aa).

ATP is bound at residue 169–176; the sequence is GDRQTGKT.

It belongs to the ATPase alpha/beta chains family. As to quaternary structure, F-type ATPases have 2 components, CF(1) - the catalytic core - and CF(0) - the membrane proton channel. CF(1) has five subunits: alpha(3), beta(3), gamma(1), delta(1), epsilon(1). CF(0) has four main subunits: a(1), b(1), b'(1) and c(9-12).

It is found in the cell inner membrane. The enzyme catalyses ATP + H2O + 4 H(+)(in) = ADP + phosphate + 5 H(+)(out). Functionally, produces ATP from ADP in the presence of a proton gradient across the membrane. The alpha chain is a regulatory subunit. The chain is ATP synthase subunit alpha from Cereibacter sphaeroides (strain ATCC 17025 / ATH 2.4.3) (Rhodobacter sphaeroides).